The primary structure comprises 184 residues: Alpha-tubulin N-acetyltransferase (184 aa).

Residues 1-174 form the N-acetyltransferase domain; the sequence is MDTHGEKMKN…NNFVIFAEYF (174 aa). Acetyl-CoA contacts are provided by residues 108-121 and 144-153; these read FYIRRDFRKRGLGL and SHKLRSFLKK.

It belongs to the acetyltransferase ATAT1 family.

The enzyme catalyses L-lysyl-[alpha-tubulin] + acetyl-CoA = N(6)-acetyl-L-lysyl-[alpha-tubulin] + CoA + H(+). Its function is as follows. Specifically acetylates 'Lys-40' in alpha-tubulin on the lumenal side of microtubules. Promotes microtubule destabilization and accelerates microtubule dynamics; this activity may be independent of acetylation activity. Acetylates alpha-tubulin with a slow enzymatic rate, due to a catalytic site that is not optimized for acetyl transfer. Enters the microtubule through each end and diffuses quickly throughout the lumen of microtubules. Acetylates only long/old microtubules because of its slow acetylation rate since it does not have time to act on dynamically unstable microtubules before the enzyme is released. The sequence is that of Alpha-tubulin N-acetyltransferase from Plasmodium vivax (strain Salvador I).